Here is a 521-residue protein sequence, read N- to C-terminus: Medium/long-chain-fatty-acid--[acyl-carrier-protein] ligase MbtM (521 aa).

Belongs to the ATP-dependent AMP-binding enzyme family.

It catalyses the reaction a long-chain fatty acid + holo-[ACP] + ATP = a long-chain fatty acyl-[ACP] + AMP + diphosphate. The enzyme catalyses a medium-chain fatty acid + holo-[ACP] + ATP = a medium-chain fatty acyl-[ACP] + AMP + diphosphate. It functions in the pathway siderophore biosynthesis; mycobactin biosynthesis. Activates lipidic moieties required for mycobactin biosynthesis. Converts medium- to long-chain aliphatic fatty acids into acyl adenylate, which is further transferred on to the phosphopantetheine arm of the carrier protein MbtL. The protein is Medium/long-chain-fatty-acid--[acyl-carrier-protein] ligase MbtM (mbtM) of Mycobacterium tuberculosis (strain CDC 1551 / Oshkosh).